The primary structure comprises 296 residues: Mitochondrial arginine transporter BAC2 (296 aa).

3 Solcar repeats span residues 13-93, 104-187, and 198-282; these read GREF…FSRS, PSYR…VRER, and ENLR…ALRC. 6 helical membrane-spanning segments follow: residues 16-36, 70-90, 110-130, 162-181, 204-224, and 260-280; these read FVAGGFGGVAGIISGYPLDTL, AAPLASVTFQNAMVFQIYAIF, ALGGVATGAVQSLLLTPVELI, GLTITVLRDAPAHGLYFWTY, LVAGGLAGVASWVACYPLDVV, and TAVARAFVVNGAIFAAYEVAL.

The protein belongs to the mitochondrial carrier (TC 2.A.29) family. In terms of tissue distribution, high expression in flowers, stamens, petals and pollen. Expressed in roots, leaves and stems.

It is found in the mitochondrion inner membrane. With respect to regulation, inhibited by mercuric chloride. Functionally, mitochondrial arginine transporter that catalyzes the counter-exchange of arginine with lysine, ornithine, arginine, histidine and citrulline. Substrate preference in reconstituted proteoliposomes is arginine &gt; homoarginine &gt; citrulline &gt; histidine &gt; lysine &gt; ornithine. May be involved in the delivery of arginine, released from seed reserves, to mitochondrial arginase and the export of ornithine. May contribute to proline accumulation in response to hyperosmotic stress. The chain is Mitochondrial arginine transporter BAC2 (BAC2) from Arabidopsis thaliana (Mouse-ear cress).